The sequence spans 741 residues: Homeobox protein AHox1 (741 aa).

Disordered stretches follow at residues 1–30 (MEKM…KSSS), 61–96 (KRRL…NFCR), 146–183 (VNPL…KSCC), 203–226 (ADSD…INQD), 357–383 (KTEE…PIRT), 476–501 (FDFP…NPQT), and 616–642 (QYGH…GTVK). Low complexity predominate over residues 7-19 (KSVSPVPFNNSNN). The segment covering 63–78 (RLLDPQNKKKQNRFER) has biased composition (basic and acidic residues). The span at 79-92 (YSSSNHAQEQSSEE) shows a compositional bias: polar residues. Low complexity predominate over residues 169–181 (SFSSSSEASDSKS). Residues 363–375 (RSPSETKQYSPDA) are compositionally biased toward polar residues. Positions 616-629 (QYGHMSSSQNPHSE) are enriched in polar residues. The segment covering 630-639 (TQNRSEEVRG) has biased composition (basic and acidic residues). The segment at residues 645 to 704 (RKWNRAVFSLMQRRGLEKSFQSQKYVAKPERRKLADALSLTDAQVKIWFQNRRMKWRQEI) is a DNA-binding region (homeobox). Residues 722–741 (EIEKEKTQTPSDEGEVINVD) form a disordered region.

The protein belongs to the H2.0 homeobox family. In terms of tissue distribution, expressed in the tissues of endodermal origin.

It localises to the nucleus. In Halocynthia roretzi (Sea squirt), this protein is Homeobox protein AHox1 (AHOX1).